The following is a 253-amino-acid chain: MTSTGDSPSIQSLRDLREASCGPVGGAAEGSPTVTNDLSENVILTSLDDLHNWARLSSLWPLLYGTACCFIEFAALLGSRFDFDRFGLVPRSSPRQADLLIVAGTVTMKMGPALVRLYEQMPEPKYVIAMGACTITGGMFSADSTTAVRGVDKLIPVDLYLPGCPPRPEAIFDAVIKLRKKVGNESVSDRRQLKQTHRYCTIDHAMVPVEPIVTGAYLRAETQVAALSPGVGVPMAAPEQTESAEPVSSGASS.

Residues Cys-68, Cys-69, Cys-133, and Cys-164 each coordinate [4Fe-4S] cluster.

Belongs to the complex I 20 kDa subunit family. In terms of assembly, NDH-1 can be composed of about 15 different subunits; different subcomplexes with different compositions have been identified which probably have different functions. [4Fe-4S] cluster serves as cofactor.

The protein localises to the cellular thylakoid membrane. The catalysed reaction is a plastoquinone + NADH + (n+1) H(+)(in) = a plastoquinol + NAD(+) + n H(+)(out). It carries out the reaction a plastoquinone + NADPH + (n+1) H(+)(in) = a plastoquinol + NADP(+) + n H(+)(out). Its function is as follows. NDH-1 shuttles electrons from an unknown electron donor, via FMN and iron-sulfur (Fe-S) centers, to quinones in the respiratory and/or the photosynthetic chain. The immediate electron acceptor for the enzyme in this species is believed to be plastoquinone. Couples the redox reaction to proton translocation, and thus conserves the redox energy in a proton gradient. Cyanobacterial NDH-1 also plays a role in inorganic carbon-concentration. The sequence is that of NAD(P)H-quinone oxidoreductase subunit K from Synechococcus sp. (strain CC9311).